Consider the following 181-residue polypeptide: Dual-action ribosomal maturation protein DarP (181 aa).

This sequence belongs to the DarP family.

The protein resides in the cytoplasm. Functionally, member of a network of 50S ribosomal subunit biogenesis factors which assembles along the 30S-50S interface, preventing incorrect 23S rRNA structures from forming. Promotes peptidyl transferase center (PTC) maturation. The polypeptide is Dual-action ribosomal maturation protein DarP (Actinobacillus succinogenes (strain ATCC 55618 / DSM 22257 / CCUG 43843 / 130Z)).